The primary structure comprises 151 residues: 3-hydroxyacyl-[acyl-carrier-protein] dehydratase FabZ (151 aa).

H54 is an active-site residue.

The protein belongs to the thioester dehydratase family. FabZ subfamily.

The protein localises to the cytoplasm. The enzyme catalyses a (3R)-hydroxyacyl-[ACP] = a (2E)-enoyl-[ACP] + H2O. In terms of biological role, involved in unsaturated fatty acids biosynthesis. Catalyzes the dehydration of short chain beta-hydroxyacyl-ACPs and long chain saturated and unsaturated beta-hydroxyacyl-ACPs. The chain is 3-hydroxyacyl-[acyl-carrier-protein] dehydratase FabZ from Salmonella agona (strain SL483).